A 644-amino-acid polypeptide reads, in one-letter code: Exoribonuclease 2 (644 aa).

Residues 189–516 enclose the RNB domain; that stretch reads RQDLTALNFV…NHRLLKAAIK (328 aa). Positions 561-643 constitute an S1 motif domain; it reads DTRFAAEIID…ETRSIIARPV (83 aa).

Belongs to the RNR ribonuclease family. RNase II subfamily.

The protein localises to the cytoplasm. The enzyme catalyses Exonucleolytic cleavage in the 3'- to 5'-direction to yield nucleoside 5'-phosphates.. Involved in mRNA degradation. Hydrolyzes single-stranded polyribonucleotides processively in the 3' to 5' direction. This is Exoribonuclease 2 from Escherichia fergusonii (strain ATCC 35469 / DSM 13698 / CCUG 18766 / IAM 14443 / JCM 21226 / LMG 7866 / NBRC 102419 / NCTC 12128 / CDC 0568-73).